The sequence spans 730 residues: Elongation factor 2 (730 aa).

The region spanning Lys19–Phe260 is the tr-type G domain. Residues Ala28–Thr35, Asp94–His98, and Asn148–Asp151 contribute to the GTP site. His597 is modified (diphthamide).

Belongs to the TRAFAC class translation factor GTPase superfamily. Classic translation factor GTPase family. EF-G/EF-2 subfamily.

The protein localises to the cytoplasm. Functionally, catalyzes the GTP-dependent ribosomal translocation step during translation elongation. During this step, the ribosome changes from the pre-translocational (PRE) to the post-translocational (POST) state as the newly formed A-site-bound peptidyl-tRNA and P-site-bound deacylated tRNA move to the P and E sites, respectively. Catalyzes the coordinated movement of the two tRNA molecules, the mRNA and conformational changes in the ribosome. This Methanosphaerula palustris (strain ATCC BAA-1556 / DSM 19958 / E1-9c) protein is Elongation factor 2.